Reading from the N-terminus, the 199-residue chain is Alpha-D-glucose 1-phosphate phosphatase YihX (199 aa).

Residue D6 is the Nucleophile of the active site. Mg(2+) is bound at residue D6. Residues 6-8, 107-108, K141, and D166 each bind substrate; these read DLG and SN. Mg(2+) is bound at residue D166.

This sequence belongs to the HAD-like hydrolase superfamily. YihX family. Requires Mg(2+) as cofactor. Mn(2+) is required as a cofactor. Co(2+) serves as cofactor. The cofactor is Zn(2+).

The catalysed reaction is alpha-D-glucose 1-phosphate + H2O = D-glucose + phosphate. Catalyzes the dephosphorylation of alpha-D-glucose 1-phosphate (Glc1P) and, to a lesser extent, of other sugar phosphates. Has no activity with the beta form of Glc1P. In addition, YihX has significant phosphatase activity against pyridoxal phosphate (PLP) and low beta-phosphoglucomutase activity. In Escherichia coli (strain K12), this protein is Alpha-D-glucose 1-phosphate phosphatase YihX (yihX).